The sequence spans 227 residues: E3 ubiquitin-protein ligase ZNRF1 (227 aa).

Residues 1-42 (MGGKQSTAARSRGPFPGVSTDDSAVPPPGGAPHFGHYRTGGG) form a disordered region. Residue Gly2 is the site of N-myristoyl glycine attachment. Positions 2 to 10 (GGKQSTAAR) are required for endosomal and lysosomal localization and myristoylation. 3 positions are modified to phosphoserine: Ser50, Ser52, and Ser53. Residues 68-105 (PFGLYTPASRGTGDSERAPGGGGSASDSTYAHGNGYQE) form a disordered region. A Phosphotyrosine; by SRC modification is found at Tyr103. The residue at position 123 (Ser123) is a Phosphoserine. The RING-type; atypical zinc-finger motif lies at 184-225 (CVICLEELLQGDTIARLPCLCIYHKSCIDSWFEVNRSCPEHP).

In terms of assembly, interacts with AKT1, GLUL and TUBB2A. Interacts with ZNRF2. Interacts (via its RING domain) with UBE2N. Interacts (when phosphorylated) with YWHAE. N-myristoylation targets ZNRF1 to intracellular membranes. Post-translationally, phosphorylated by SRC at Tyr-103; leading to 'Lys-63'-linked ubiquitination of TLR3, lysosomal trafficking and degradation. Expressed primarily in the nervous system, with expression higher in developing brain relative to adult. Expressed at low levels in testis and thymus.

Its subcellular location is the endosome. It localises to the lysosome. It is found in the membrane. The protein localises to the cytoplasmic vesicle. The protein resides in the secretory vesicle. Its subcellular location is the synaptic vesicle membrane. The enzyme catalyses S-ubiquitinyl-[E2 ubiquitin-conjugating enzyme]-L-cysteine + [acceptor protein]-L-lysine = [E2 ubiquitin-conjugating enzyme]-L-cysteine + N(6)-ubiquitinyl-[acceptor protein]-L-lysine.. Its pathway is protein modification; protein ubiquitination. Functionally, E3 ubiquitin-protein ligase that plays a role in different processes including cell differentiation, receptor recycling or regulation of inflammation. Mediates the ubiquitination of AKT1 and GLUL, thereby playing a role in neuron cells differentiation. Plays a role in the establishment and maintenance of neuronal transmission and plasticity. Regulates Schwann cells differentiation by mediating ubiquitination of GLUL. Promotes neurodegeneration by mediating 'Lys-48'-linked polyubiquitination and subsequent degradation of AKT1 in axons: degradation of AKT1 prevents AKT1-mediated phosphorylation of GSK3B, leading to GSK3B activation and phosphorylation of DPYSL2/CRMP2 followed by destabilization of microtubule assembly in axons. Ubiquitinates the Na(+)/K(+) ATPase alpha-1 subunit/ATP1A1 and thereby influences its endocytosis and/or degradation. Controls ligand-induced EGFR signaling via mediating receptor ubiquitination and recruitment of the ESCRT machinery. Acts as a negative feedback mechanism controlling TLR3 trafficking by mediating TLR3 'Lys-63'-linked polyubiquitination to reduce type I IFN production. Modulates inflammation by promoting caveolin-1/CAV1 ubiquitination and degradation to regulate TLR4-activated immune response. This is E3 ubiquitin-protein ligase ZNRF1 (ZNRF1) from Homo sapiens (Human).